The primary structure comprises 437 residues: Glutamate-1-semialdehyde 2,1-aminomutase (437 aa).

N6-(pyridoxal phosphate)lysine is present on K272.

It belongs to the class-III pyridoxal-phosphate-dependent aminotransferase family. HemL subfamily. Homodimer. Pyridoxal 5'-phosphate serves as cofactor.

The protein localises to the cytoplasm. The catalysed reaction is (S)-4-amino-5-oxopentanoate = 5-aminolevulinate. The protein operates within porphyrin-containing compound metabolism; protoporphyrin-IX biosynthesis; 5-aminolevulinate from L-glutamyl-tRNA(Glu): step 2/2. The polypeptide is Glutamate-1-semialdehyde 2,1-aminomutase (Moorella thermoacetica (strain ATCC 39073 / JCM 9320)).